We begin with the raw amino-acid sequence, 628 residues long: MTTTDTASETKPFQAEVAELLNLMVHSVYSETDIFLRELISNASDALDKLRYESIATPALMEAGGAPKIQIVPRKAPDTLTVIDNGIGMNRQELIDNLGTIAKSGTKSFLTKLTEAKDGAGLIGQFGVGFYAAFMVADNIVVTSRRAGSGEVWTWSSSGGAGFEIAPASEEAAARVVRGTEIVLHLKPDAAKYLEAYQIERIVSEYSDNIQFPIELVPEEGEPRQINSASALWQRSKSELTEEDYNQAYKQIAGAFDEPAMTLHYRAEGRQSYAVLLFAPATKPFDLFEPERKGRIKLYVRRVFITADADLLPPYLRFLRGVIDSEDLPLNLSREMLQNNPQLAQIRKAVTGKVIGELESLADKKPEDFARIWEAFGPVLKEGLYEDYERREKLLALARFTTTAGEKRTLSQYVEAMKENQTEIYYLVGDSIERLKSNPKLESATARGIEVLLLTDGVDAFWTSGQLDFGGKPLKSLSQGDVNFDLIPKLDADKPDDKPDETKADEATVIAVIKDALGERVSDVKASQRLTSSASCLVAGGFGPDRELEKMLARANKGAATKPVLEINLGHPLVAALADAKADKADATDLSFLLLEQAQILDGELPEDPAAFAGRLNRLVLRGLVAHG.

Positions 1 to 334 (MTTTDTASET…SEDLPLNLSR (334 aa)) are a; substrate-binding. Residues 335–550 (EMLQNNPQLA…GFGPDRELEK (216 aa)) are b. Positions 551-628 (MLARANKGAA…LVLRGLVAHG (78 aa)) are c.

The protein belongs to the heat shock protein 90 family. As to quaternary structure, homodimer.

Its subcellular location is the cytoplasm. Molecular chaperone. Has ATPase activity. This chain is Chaperone protein HtpG, found in Rhodopseudomonas palustris (strain BisB5).